The following is a 1697-amino-acid chain: Chromatin-remodeling ATPase INO80 (1697 aa).

Disordered regions lie at residues 1-324 (MTGA…SDVE), 398-569 (QDEK…LSAY), and 615-637 (ASKQ…QARA). Polar residues-rich tracts occupy residues 33 to 53 (NNEQ…SRSP), 85 to 94 (QYQAHSSAGN), and 108 to 122 (LSGN…STPS). Basic and acidic residues predominate over residues 128–143 (GRPDSHPQTSPKKESE). Residues 202–221 (SSAEATPTPLAPAATAQTSL) show a composition bias toward low complexity. Residues 248–271 (RLEKKPTTEKRRRNPPETEQKTAD) show a composition bias toward basic and acidic residues. Residues 272–288 (SRTSNVANGVSEPSKTL) show a composition bias toward polar residues. Residues 383-466 (ANEASVVAEV…TKRALEGITA (84 aa)) adopt a coiled-coil conformation. Composition is skewed to basic and acidic residues over residues 414–451 (ENTV…ERAQ), 512–523 (SKEQKQAEKDAA), 540–560 (PKED…RSKE), and 621–635 (KWQE…DTQA). The DBINO domain occupies 581-706 (IWRDIARKDI…SHFIGRKIKG (126 aa)). Positions 623–694 (QERTNKSMKD…KLNFLISQTE (72 aa)) form a coiled coil. The region spanning 835–1007 (VNLYEQGING…WALLHFIMPT (173 aa)) is the Helicase ATP-binding domain. Position 848 to 855 (848 to 855 (DEMGLGKT)) interacts with ATP. The DEAQ box signature appears at 958–961 (DEAQ). One can recognise a Helicase C-terminal domain in the interval 1410–1570 (KLDELLRELK…GVDFNTRNRE (161 aa)). Residues 1626–1697 (YHEGEGNFDD…IDGDGGLGPS (72 aa)) form a disordered region. A compositionally biased stretch (polar residues) spans 1646–1658 (PVSTAENVGTPSS). Over residues 1663-1679 (KRGRGRGSGKGTSKRAK) the composition is skewed to basic residues. Basic and acidic residues predominate over residues 1680–1689 (TTKERLRLID).

The protein belongs to the SNF2/RAD54 helicase family. As to quaternary structure, component of the INO80 chromatin-remodeling complex.

The protein resides in the nucleus. It catalyses the reaction ATP + H2O = ADP + phosphate + H(+). In terms of biological role, ATPase component of the INO80 complex which remodels chromatin by shifting nucleosomes and is involved in DNA repair. This Aspergillus niger (strain ATCC MYA-4892 / CBS 513.88 / FGSC A1513) protein is Chromatin-remodeling ATPase INO80 (ino80).